The chain runs to 421 residues: Cytochrome c biogenesis protein Ccs1 (421 aa).

3 consecutive transmembrane segments (helical) span residues 12-32 (LRFA…GTVI), 71-91 (TWWF…CTLL), and 157-177 (IAPI…IIGS).

This sequence belongs to the Ccs1/CcsB family. In terms of assembly, may interact with CcsA.

It is found in the plastid. The protein resides in the chloroplast thylakoid membrane. Functionally, required during biogenesis of c-type cytochromes (cytochrome c6 and cytochrome f) at the step of heme attachment. This is Cytochrome c biogenesis protein Ccs1 from Thalassiosira pseudonana (Marine diatom).